The primary structure comprises 215 residues: Ribonuclease T (215 aa).

One can recognise an Exonuclease domain in the interval 20 to 194 (VVIDVETAGF…YDTLQTAKLF (175 aa)). Asp23, Glu25, His181, and Asp186 together coordinate Mg(2+). His181 functions as the Proton donor/acceptor in the catalytic mechanism.

The protein belongs to the RNase T family. As to quaternary structure, homodimer. Requires Mg(2+) as cofactor.

Its function is as follows. Trims short 3' overhangs of a variety of RNA species, leaving a one or two nucleotide 3' overhang. Responsible for the end-turnover of tRNA: specifically removes the terminal AMP residue from uncharged tRNA (tRNA-C-C-A). Also appears to be involved in tRNA biosynthesis. The chain is Ribonuclease T from Yersinia pestis.